The sequence spans 211 residues: Superoxide dismutase [Fe] (211 aa).

Residues H34, H85, D171, and H175 each coordinate Fe cation.

Belongs to the iron/manganese superoxide dismutase family. The cofactor is Fe cation.

The enzyme catalyses 2 superoxide + 2 H(+) = H2O2 + O2. Functionally, destroys superoxide anion radicals which are normally produced within the cells and which are toxic to biological systems. This is Superoxide dismutase [Fe] (sod) from Acidianus ambivalens (Desulfurolobus ambivalens).